The following is a 351-amino-acid chain: N-acetyl-gamma-glutamyl-phosphate reductase (351 aa).

C154 is a catalytic residue.

The protein belongs to the NAGSA dehydrogenase family. Type 1 subfamily.

The protein resides in the cytoplasm. The enzyme catalyses N-acetyl-L-glutamate 5-semialdehyde + phosphate + NADP(+) = N-acetyl-L-glutamyl 5-phosphate + NADPH + H(+). It functions in the pathway amino-acid biosynthesis; L-arginine biosynthesis; N(2)-acetyl-L-ornithine from L-glutamate: step 3/4. Catalyzes the NADPH-dependent reduction of N-acetyl-5-glutamyl phosphate to yield N-acetyl-L-glutamate 5-semialdehyde. The polypeptide is N-acetyl-gamma-glutamyl-phosphate reductase (Prochlorococcus marinus subsp. pastoris (strain CCMP1986 / NIES-2087 / MED4)).